The sequence spans 378 residues: Carbamoyl phosphate synthase small chain (378 aa).

Residues 1–188 are CPSase; the sequence is MSILKEAYLY…THFAYGTSPN (188 aa). Serine 49, glycine 244, and glycine 246 together coordinate L-glutamine. The Glutamine amidotransferase type-1 domain maps to 192-378; sequence KVVAIDFGAK…FEEFAKLCCK (187 aa). The Nucleophile role is filled by cysteine 272. Residues leucine 273, glutamine 276, asparagine 314, and tyrosine 317 each coordinate L-glutamine. Catalysis depends on residues histidine 355 and glutamate 357.

Belongs to the CarA family. Composed of two chains; the small (or glutamine) chain promotes the hydrolysis of glutamine to ammonia, which is used by the large (or ammonia) chain to synthesize carbamoyl phosphate. Tetramer of heterodimers (alpha,beta)4.

It catalyses the reaction hydrogencarbonate + L-glutamine + 2 ATP + H2O = carbamoyl phosphate + L-glutamate + 2 ADP + phosphate + 2 H(+). The enzyme catalyses L-glutamine + H2O = L-glutamate + NH4(+). It participates in amino-acid biosynthesis; L-arginine biosynthesis; carbamoyl phosphate from bicarbonate: step 1/1. It functions in the pathway pyrimidine metabolism; UMP biosynthesis via de novo pathway; (S)-dihydroorotate from bicarbonate: step 1/3. Functionally, small subunit of the glutamine-dependent carbamoyl phosphate synthetase (CPSase). CPSase catalyzes the formation of carbamoyl phosphate from the ammonia moiety of glutamine, carbonate, and phosphate donated by ATP, constituting the first step of 2 biosynthetic pathways, one leading to arginine and/or urea and the other to pyrimidine nucleotides. The small subunit (glutamine amidotransferase) binds and cleaves glutamine to supply the large subunit with the substrate ammonia. The polypeptide is Carbamoyl phosphate synthase small chain (Helicobacter hepaticus (strain ATCC 51449 / 3B1)).